Consider the following 100-residue polypeptide: MSHEPEYKDWQQIVELIRSSVDNQQHEMLLTMLMTPDERESLTARVNILNELLKGELSQRQISQMLGVGIATITRGSNELKSKSDTDKDKLKTLLEQGAQ.

The DNA-binding element occupies 59–82; that stretch reads QRQISQMLGVGIATITRGSNELKS. Over residues 78–93 the composition is skewed to basic and acidic residues; that stretch reads NELKSKSDTDKDKLKT. Positions 78-100 are disordered; sequence NELKSKSDTDKDKLKTLLEQGAQ.

The protein belongs to the TrpR family. As to quaternary structure, homodimer.

It is found in the cytoplasm. Functionally, this protein is an aporepressor. When complexed with L-tryptophan it binds the operator region of the trp operon and prevents the initiation of transcription. This chain is Trp operon repressor homolog, found in Vibrio campbellii (strain ATCC BAA-1116).